The sequence spans 193 residues: MRGRDEDTGEFRGASRSQQRREALEIFDLGEKLVALTPAQLAKLPVPESLIQHIEESKRITSHIAHKRQLAFLAKHMRREDDETLAAIRDALDANSDTARREVAAIHRVERWRERLLADGDVALAELLEAYPAADRQQLRQLVRNAIHERAKNKPPRAYRELFQVLRDLSQEQGLESGDSGLEDGESALEDDE.

Residues 1–10 (MRGRDEDTGE) are compositionally biased toward basic and acidic residues. Disordered stretches follow at residues 1–20 (MRGRDEDTGEFRGASRSQQR) and 171–193 (QEQGLESGDSGLEDGESALEDDE). Acidic residues predominate over residues 181 to 193 (GLEDGESALEDDE).

The protein belongs to the DarP family.

The protein resides in the cytoplasm. Functionally, member of a network of 50S ribosomal subunit biogenesis factors which assembles along the 30S-50S interface, preventing incorrect 23S rRNA structures from forming. Promotes peptidyl transferase center (PTC) maturation. The protein is Dual-action ribosomal maturation protein DarP of Xanthomonas oryzae pv. oryzae (strain KACC10331 / KXO85).